Reading from the N-terminus, the 70-residue chain is Conotoxin elongated-tx3a-a (70 aa).

The first 24 residues, 1-24 (MLKMGVVLFIFLVLFPLATLQLDA), serve as a signal peptide directing secretion. Residues 25–44 (DQPVERYAENKQLLSPDERR) constitute a propeptide that is removed on maturation. Intrachain disulfides connect cysteine 55/cysteine 68, cysteine 56/cysteine 66, and cysteine 61/cysteine 69. At tryptophan 58 the chain carries 6'-bromotryptophan; partial. Position 69 is a cysteine amide; partial (cysteine 69).

The protein belongs to the conotoxin M superfamily. Two short peptides are produced from this precursor; Conotoxin tx3a-b is amidated at Cys-69 (but has no bromotryptophan), whereas conotoxin tx3a-a has an unmodified Gly-70 and a bromotryptophan. Two elongated peptides are also produced; Conotoxin elongated-tx3a-b is amidated at Cys-69 (but has no bromotryptophan), whereas conotoxin elongated tx3a-a has an unmodified Gly-70 (but has no bromotryptophan). In terms of processing, ju et al. (2022) describe a disulfide connectivity (C55-C61; C56-C69; C66-C68) that differs from that of Han and colleagues (2006), McDougal et al. (2008), and Ueberheide et al. (2009). Expressed by the venom duct. Is present in all duct parts with a highest content in part 2 (proximal of the venom bulb) and then decreases in concentration toward the end of the duct.

It localises to the secreted. In terms of biological role, intracranial injection into mice causes scratching and hyperactivity. In vitro, inhibits proliferation of the mice ovarian cancer cells ID8. The polypeptide is Conotoxin elongated-tx3a-a (Conus textile (Cloth-of-gold cone)).